A 164-amino-acid polypeptide reads, in one-letter code: Peptidyl-prolyl cis-trans isomerase (164 aa).

In terms of domain architecture, PPIase cyclophilin-type spans 7 to 163 (FFDLQANGEN…KKITIADCGQ (157 aa)).

The protein belongs to the cyclophilin-type PPIase family. PPIase A subfamily.

The protein resides in the cytoplasm. It catalyses the reaction [protein]-peptidylproline (omega=180) = [protein]-peptidylproline (omega=0). With respect to regulation, binds cyclosporin A (CsA). CsA mediates some of its effects via an inhibitory action on PPIase. Functionally, PPIases accelerate the folding of proteins. It catalyzes the cis-trans isomerization of proline imidic peptide bonds in oligopeptides. This chain is Peptidyl-prolyl cis-trans isomerase, found in Hemicentrotus pulcherrimus (Sea urchin).